The sequence spans 142 residues: Large ribosomal subunit protein uL11 (142 aa).

This sequence belongs to the universal ribosomal protein uL11 family. Part of the ribosomal stalk of the 50S ribosomal subunit. Interacts with L10 and the large rRNA to form the base of the stalk. L10 forms an elongated spine to which L12 dimers bind in a sequential fashion forming a multimeric L10(L12)X complex. One or more lysine residues are methylated.

In terms of biological role, forms part of the ribosomal stalk which helps the ribosome interact with GTP-bound translation factors. This chain is Large ribosomal subunit protein uL11, found in Nitrobacter winogradskyi (strain ATCC 25391 / DSM 10237 / CIP 104748 / NCIMB 11846 / Nb-255).